Reading from the N-terminus, the 501-residue chain is Rhazimal synthase (501 aa).

A helical membrane pass occupies residues 4-24 (MQLSFASAVVYSLIFFVFLLV). The N-linked (GlcNAc...) asparagine glycan is linked to Asn282. Cys442 serves as a coordination point for heme.

This sequence belongs to the cytochrome P450 family. It depends on heme as a cofactor.

The protein resides in the membrane. It catalyses the reaction (19E)-geissoschizine + reduced [NADPH--hemoprotein reductase] + O2 = rhazimal + oxidized [NADPH--hemoprotein reductase] + 2 H2O + H(+). The catalysed reaction is (19E)-geissoschizine + reduced [NADPH--hemoprotein reductase] + O2 = akuammicine + formate + oxidized [NADPH--hemoprotein reductase] + H2O + H(+). It participates in alkaloid biosynthesis. Functionally, a cytochrome P450 monooxygenase involved in the biosynthesis of akuammilan monoterpene indole alkaloids (MIAs) natural products, components with various biological properties such as antidiabetic, antibacterial, anti-inflammatory, anticancer, and antimalarial activities. Catalyzes the conversion of geissoschizine to rhazimal. Can also, with lower efficiency, support the conversion of geissoschizine to akuammicine. The polypeptide is Rhazimal synthase (Alstonia scholaris (Dogbane)).